The chain runs to 225 residues: NAD(P)H-hydrate epimerase (225 aa).

The 201-residue stretch at 9 to 209 (MQTIDNYTVE…DIGLLTPQDF (201 aa)) folds into the YjeF N-terminal domain. 57–61 (NNGAD) lines the (6S)-NADPHX pocket. Residues Asn-58 and Asp-119 each contribute to the K(+) site. Residues 123 to 129 (GTGLNNL) and Asp-152 contribute to the (6S)-NADPHX site. Thr-155 provides a ligand contact to K(+).

It belongs to the NnrE/AIBP family. It depends on K(+) as a cofactor.

It carries out the reaction (6R)-NADHX = (6S)-NADHX. The catalysed reaction is (6R)-NADPHX = (6S)-NADPHX. Catalyzes the epimerization of the S- and R-forms of NAD(P)HX, a damaged form of NAD(P)H that is a result of enzymatic or heat-dependent hydration. This is a prerequisite for the S-specific NAD(P)H-hydrate dehydratase to allow the repair of both epimers of NAD(P)HX. The polypeptide is NAD(P)H-hydrate epimerase (Leuconostoc sp. (strain C2)).